The sequence spans 147 residues: Hemoglobin subunit epsilon (147 aa).

Residues 3 to 147 (HLTAEEKAAI…VAIALGHKYH (145 aa)) form the Globin domain. Serine 14 and serine 51 each carry phosphoserine. Histidine 64 and histidine 93 together coordinate heme b.

This sequence belongs to the globin family. In terms of assembly, heterotetramer of two alpha chains and two epsilon chains in early embryonic hemoglobin Gower-2; two zeta chains and two epsilon chains in early embryonic hemoglobin Gower-1. As to expression, red blood cells.

Functionally, the epsilon chain is a beta-type chain of early mammalian embryonic hemoglobin. The chain is Hemoglobin subunit epsilon (HBE1) from Ateles belzebuth (White-bellied spider monkey).